The following is a 544-amino-acid chain: CTP synthase (544 aa).

The tract at residues 1 to 266 is amidoligase domain; the sequence is MATNYIFVTG…DDFVCDRFRL (266 aa). Ser-14 contributes to the CTP binding site. Ser-14 provides a ligand contact to UTP. ATP-binding positions include 15–20 and Asp-72; that span reads SLGKGI. Residues Asp-72 and Glu-140 each coordinate Mg(2+). CTP-binding positions include 147–149, 187–192, and Lys-223; these read DIE and KTKPTQ. UTP is bound by residues 187-192 and Lys-223; that span reads KTKPTQ. 239 to 241 lines the ATP pocket; it reads KDV. Residues 291–542 enclose the Glutamine amidotransferase type-1 domain; that stretch reads TIGMVGKYVE…VKAAKEHQGK (252 aa). Gly-352 contributes to the L-glutamine binding site. The active-site Nucleophile; for glutamine hydrolysis is the Cys-379. Residues 380–383, Glu-403, and Arg-470 each bind L-glutamine; that span reads LGMQ. Active-site residues include His-515 and Glu-517.

Belongs to the CTP synthase family. In terms of assembly, homotetramer.

The catalysed reaction is UTP + L-glutamine + ATP + H2O = CTP + L-glutamate + ADP + phosphate + 2 H(+). The enzyme catalyses L-glutamine + H2O = L-glutamate + NH4(+). It carries out the reaction UTP + NH4(+) + ATP = CTP + ADP + phosphate + 2 H(+). It participates in pyrimidine metabolism; CTP biosynthesis via de novo pathway; CTP from UDP: step 2/2. With respect to regulation, allosterically activated by GTP, when glutamine is the substrate; GTP has no effect on the reaction when ammonia is the substrate. The allosteric effector GTP functions by stabilizing the protein conformation that binds the tetrahedral intermediate(s) formed during glutamine hydrolysis. Inhibited by the product CTP, via allosteric rather than competitive inhibition. Functionally, catalyzes the ATP-dependent amination of UTP to CTP with either L-glutamine or ammonia as the source of nitrogen. Regulates intracellular CTP levels through interactions with the four ribonucleotide triphosphates. This Glaesserella parasuis serovar 5 (strain SH0165) (Haemophilus parasuis) protein is CTP synthase.